Here is a 208-residue protein sequence, read N- to C-terminus: 3-demethoxyubiquinol 3-hydroxylase (208 aa).

Residues Glu-57, Glu-87, His-90, Glu-139, Glu-171, and His-174 each coordinate Fe cation.

Belongs to the COQ7 family. Fe cation is required as a cofactor.

Its subcellular location is the cell membrane. It catalyses the reaction a 5-methoxy-2-methyl-3-(all-trans-polyprenyl)benzene-1,4-diol + AH2 + O2 = a 3-demethylubiquinol + A + H2O. It functions in the pathway cofactor biosynthesis; ubiquinone biosynthesis. In terms of biological role, catalyzes the hydroxylation of 2-nonaprenyl-3-methyl-6-methoxy-1,4-benzoquinol during ubiquinone biosynthesis. This is 3-demethoxyubiquinol 3-hydroxylase from Burkholderia pseudomallei (strain 668).